The sequence spans 393 residues: Methylthioribose kinase (393 aa).

ATP contacts are provided by residues N38, K53, and 107-109 (EDL). D225 contributes to the substrate binding site. 242-244 (DPE) is an ATP binding site. R332 contacts substrate.

It belongs to the methylthioribose kinase family. In terms of assembly, homodimer.

It carries out the reaction 5-(methylsulfanyl)-D-ribose + ATP = 5-(methylsulfanyl)-alpha-D-ribose 1-phosphate + ADP + H(+). Its pathway is amino-acid biosynthesis; L-methionine biosynthesis via salvage pathway; S-methyl-5-thio-alpha-D-ribose 1-phosphate from S-methyl-5'-thioadenosine (hydrolase route): step 2/2. Its function is as follows. Catalyzes the phosphorylation of methylthioribose into methylthioribose-1-phosphate. This chain is Methylthioribose kinase, found in Bacillus cereus (strain ZK / E33L).